The following is a 1026-amino-acid chain: Multidrug resistance protein MdtC (1026 aa).

11 helical membrane passes run 15–35, 333–353, 360–380, 387–407, 431–451, 463–483, 528–548, 853–873, 897–917, 953–973, and 984–1004; these read ILIA…LPVA, EVEE…FLFL, LIPA…MYLC, LSLM…IVVL, VGFT…PLLL, FAVT…TLTP, LVGV…IAIP, LILI…LYES, LFNA…IGIV, PIMM…LSGG, and ITIV…TPVV.

It belongs to the resistance-nodulation-cell division (RND) (TC 2.A.6) family. MdtC subfamily. In terms of assembly, part of a tripartite efflux system composed of MdtA, MdtB and MdtC. MdtC forms a heteromultimer with MdtB.

It localises to the cell inner membrane. The chain is Multidrug resistance protein MdtC from Salmonella newport (strain SL254).